Reading from the N-terminus, the 274-residue chain is Elongation factor Ts (274 aa).

Residues 79–82 (TDFV) form an involved in Mg(2+) ion dislocation from EF-Tu region.

The protein belongs to the EF-Ts family.

The protein localises to the cytoplasm. Associates with the EF-Tu.GDP complex and induces the exchange of GDP to GTP. It remains bound to the aminoacyl-tRNA.EF-Tu.GTP complex up to the GTP hydrolysis stage on the ribosome. The chain is Elongation factor Ts from Aster yellows witches'-broom phytoplasma (strain AYWB).